We begin with the raw amino-acid sequence, 244 residues long: Carboxy-S-adenosyl-L-methionine synthase (244 aa).

Residues tyrosine 40, 65–67 (GCS), 90–91 (DN), 119–120 (DL), asparagine 134, and arginine 201 each bind S-adenosyl-L-methionine.

Belongs to the class I-like SAM-binding methyltransferase superfamily. Cx-SAM synthase family. As to quaternary structure, homodimer.

The catalysed reaction is prephenate + S-adenosyl-L-methionine = carboxy-S-adenosyl-L-methionine + 3-phenylpyruvate + H2O. Catalyzes the conversion of S-adenosyl-L-methionine (SAM) to carboxy-S-adenosyl-L-methionine (Cx-SAM). This Trichlorobacter lovleyi (strain ATCC BAA-1151 / DSM 17278 / SZ) (Geobacter lovleyi) protein is Carboxy-S-adenosyl-L-methionine synthase.